A 1142-amino-acid chain; its full sequence is Coiled-coil domain-containing protein 40 (1142 aa).

Disordered regions lie at residues 1–197 and 251–274; these read MAEP…QVLP and PSTE…AEDE. Composition is skewed to basic and acidic residues over residues 11 to 27 and 35 to 55; these read SHPE…EGNN and PEKD…HPEE. Residues 63-96 are compositionally biased toward acidic residues; sequence AIEEGEVETEGEAAVEGEEEAVSYGDAESEEEYY. At Ser-252 the chain carries Phosphoserine. Residues 265–274 show a composition bias toward acidic residues; the sequence is EGSDEEAEDE. 5 coiled-coil regions span residues 293–319, 349–470, 526–627, 684–950, and 1005–1054; these read AALK…ATKQ, HDRH…QAED, QAKS…LRRK, TSSR…LGQL, and VRKA…LTRL.

Belongs to the CCDC40 family.

Its subcellular location is the cytoplasm. It is found in the cell projection. The protein resides in the cilium. Required for assembly of dynein regulatory complex (DRC) and inner dynein arm (IDA) complexes, which are responsible for ciliary beat regulation, thereby playing a central role in motility in cilia and flagella. Probably acts together with CCDC39 to form a molecular ruler that determines the 96 nanometer (nm) repeat length and arrangements of components in cilia and flagella. Not required for outer dynein arm complexes assembly. Required for axonemal recruitment of CCDC39. The sequence is that of Coiled-coil domain-containing protein 40 from Homo sapiens (Human).